Consider the following 21-residue polypeptide: Peptide PGLa-R6 (21 aa).

Leu21 is modified (leucine amide).

In terms of tissue distribution, expressed by the skin glands.

The protein resides in the secreted. Functionally, antimicrobial peptide. The sequence is that of Peptide PGLa-R6 from Xenopus ruwenzoriensis (Uganda clawed frog).